Here is a 614-residue protein sequence, read N- to C-terminus: Vitamin B12 transporter BtuB (614 aa).

The first 20 residues, 1–20 (MIKKASLLTACSVTAFSAWA), serve as a signal peptide directing secretion. Residues 26–33 (DTLVVTAN) carry the TonB box motif. The region spanning 38–152 (PRSTVLAPTT…IGGVVNIITT (115 aa)) is the TBDR plug domain. Residues L83, S85, N92, and 110–111 (VS) contribute to the cyanocob(III)alamin site. Positions 155-614 (HPGTEISAGW…EYTLSGSYTF (460 aa)) constitute a TBDR beta-barrel domain. 3 beta stranded membrane-spanning segments follow: residues 158–165 (TEISAGWG), 169–178 (YQNYDVSTQQ), and 184–195 (TRVTLLGDYAHT). 4 residues coordinate Ca(2+): D199, Q211, D213, and D215. A run of 2 beta stranded transmembrane segments spans residues 217–227 (FLSKTLYGALE) and 232–248 (DVWS…NRTN). Positions 249 and 250 each coordinate Ca(2+). Cyanocob(III)alamin is bound at residue A251. Residue D261 coordinates Ca(2+). A run of 14 beta stranded transmembrane segments spans residues 263–277 (RKLY…LRYN), 279–296 (ELIK…KDYN), 309–325 (TLDE…NNII), 328–337 (HGNIGAGVDW), 353–369 (YDQR…QQVG), 371–381 (FTFEGAGRSDD), 385–400 (FGRH…WEFI), 403–417 (YRFI…KAPN), 434–443 (KSKQWEGAFE), 449–458 (VNWRISGYRN), 473–490 (YYNE…TANF), 494–509 (PLTH…ARNA), 517–529 (RRAK…QLDW), and 535–550 (DWGI…YDKD). Residue T309 coordinates cyanocob(III)alamin. R517 is a cyanocob(III)alamin binding site. Y551 contributes to the cyanocob(III)alamin binding site. 3 consecutive transmembrane segments (beta stranded) span residues 558–572 (TVKM…LAVA), 585–596 (IANLFDKDYETV), and 602–614 (AGRE…SYTF). Residues 597 to 614 (YGYQTAGREYTLSGSYTF) carry the TonB C-terminal box motif.

This sequence belongs to the TonB-dependent receptor family. BtuB (TC 1.B.14.3.1) subfamily.

Its subcellular location is the cell outer membrane. Its function is as follows. Involved in the active translocation of vitamin B12 (cyanocobalamin) across the outer membrane to the periplasmic space. It derives its energy for transport by interacting with the trans-periplasmic membrane protein TonB. In Escherichia coli O6:K15:H31 (strain 536 / UPEC), this protein is Vitamin B12 transporter BtuB.